We begin with the raw amino-acid sequence, 402 residues long: 1-deoxy-D-xylulose 5-phosphate reductoisomerase (402 aa).

Residues threonine 27, glycine 28, serine 29, isoleucine 30, glycine 53, lysine 54, asparagine 55, and asparagine 140 each contribute to the NADPH site. Residue lysine 141 participates in 1-deoxy-D-xylulose 5-phosphate binding. Glutamate 142 contributes to the NADPH binding site. A Mn(2+)-binding site is contributed by aspartate 166. Serine 167, glutamate 168, serine 192, and histidine 215 together coordinate 1-deoxy-D-xylulose 5-phosphate. Glutamate 168 serves as a coordination point for Mn(2+). Residue glycine 221 participates in NADPH binding. 1-deoxy-D-xylulose 5-phosphate contacts are provided by serine 228, asparagine 233, lysine 234, and glutamate 237. Glutamate 237 is a binding site for Mn(2+).

This sequence belongs to the DXR family. It depends on Mg(2+) as a cofactor. Mn(2+) serves as cofactor.

It catalyses the reaction 2-C-methyl-D-erythritol 4-phosphate + NADP(+) = 1-deoxy-D-xylulose 5-phosphate + NADPH + H(+). Its pathway is isoprenoid biosynthesis; isopentenyl diphosphate biosynthesis via DXP pathway; isopentenyl diphosphate from 1-deoxy-D-xylulose 5-phosphate: step 1/6. In terms of biological role, catalyzes the NADPH-dependent rearrangement and reduction of 1-deoxy-D-xylulose-5-phosphate (DXP) to 2-C-methyl-D-erythritol 4-phosphate (MEP). The protein is 1-deoxy-D-xylulose 5-phosphate reductoisomerase of Lawsonia intracellularis (strain PHE/MN1-00).